The following is a 243-amino-acid chain: DNA repair protein RecO (243 aa).

This sequence belongs to the RecO family.

Involved in DNA repair and RecF pathway recombination. The chain is DNA repair protein RecO from Hyphomonas neptunium (strain ATCC 15444).